We begin with the raw amino-acid sequence, 218 residues long: Histone H1 (218 aa).

A compositionally biased stretch (low complexity) spans 1–19 (MSETAPVAAPAVSAPGAKA). Disordered stretches follow at residues 1–42 (MSET…PSVT) and 89–218 (VSKG…TKKK). Ser2 bears the N-acetylserine mark. An H15 domain is found at 37 to 110 (AGPSVTELIT…GASGSFKLNK (74 aa)). 4 stretches are compositionally biased toward basic residues: residues 118–133 (KATKKKPAAKPKKPAA), 141–158 (KKPKKAAAVKKSPKKAKK), 166–184 (KAAKSPKKATKAGRPKKTA), and 191–218 (KAVKPKAAKSKAAKPKAAKAKKAATKKK).

This sequence belongs to the histone H1/H5 family.

The protein resides in the nucleus. The protein localises to the chromosome. Functionally, histones H1 are necessary for the condensation of nucleosome chains into higher-order structures. The sequence is that of Histone H1 from Gallus gallus (Chicken).